The sequence spans 162 residues: Cyanate hydratase (162 aa).

Active-site residues include Arg102, Glu105, and Ser128.

The protein belongs to the cyanase family.

It carries out the reaction cyanate + hydrogencarbonate + 3 H(+) = NH4(+) + 2 CO2. Functionally, catalyzes the reaction of cyanate with bicarbonate to produce ammonia and carbon dioxide. The protein is Cyanate hydratase of Mycosarcoma maydis (Corn smut fungus).